A 231-amino-acid chain; its full sequence is 5'-methylthioadenosine/S-adenosylhomocysteine nucleosidase (231 aa).

Residue glutamate 12 is the Proton acceptor of the active site. Residues glycine 78, methionine 153, and 174–175 (ME) each bind substrate. Aspartate 198 functions as the Proton donor in the catalytic mechanism.

The protein belongs to the PNP/UDP phosphorylase family. MtnN subfamily.

The catalysed reaction is S-adenosyl-L-homocysteine + H2O = S-(5-deoxy-D-ribos-5-yl)-L-homocysteine + adenine. It carries out the reaction S-methyl-5'-thioadenosine + H2O = 5-(methylsulfanyl)-D-ribose + adenine. The enzyme catalyses 5'-deoxyadenosine + H2O = 5-deoxy-D-ribose + adenine. It participates in amino-acid biosynthesis; L-methionine biosynthesis via salvage pathway; S-methyl-5-thio-alpha-D-ribose 1-phosphate from S-methyl-5'-thioadenosine (hydrolase route): step 1/2. In terms of biological role, catalyzes the irreversible cleavage of the glycosidic bond in both 5'-methylthioadenosine (MTA) and S-adenosylhomocysteine (SAH/AdoHcy) to adenine and the corresponding thioribose, 5'-methylthioribose and S-ribosylhomocysteine, respectively. Also cleaves 5'-deoxyadenosine, a toxic by-product of radical S-adenosylmethionine (SAM) enzymes, into 5-deoxyribose and adenine. The polypeptide is 5'-methylthioadenosine/S-adenosylhomocysteine nucleosidase (Bacillus anthracis (strain A0248)).